The primary structure comprises 682 residues: DNA ligase (682 aa).

Residues 42-46, 88-89, and Glu-121 contribute to the NAD(+) site; these read DAAYD and SL. Lys-123 functions as the N6-AMP-lysine intermediate in the catalytic mechanism. Arg-144, Glu-180, Lys-291, and Lys-315 together coordinate NAD(+). The Zn(2+) site is built by Cys-409, Cys-412, Cys-427, and Cys-433. Residues 601-682 enclose the BRCT domain; sequence AAGGALAGKT…FRSLAGLPPG (82 aa).

The protein belongs to the NAD-dependent DNA ligase family. LigA subfamily. It depends on Mg(2+) as a cofactor. Requires Mn(2+) as cofactor.

It carries out the reaction NAD(+) + (deoxyribonucleotide)n-3'-hydroxyl + 5'-phospho-(deoxyribonucleotide)m = (deoxyribonucleotide)n+m + AMP + beta-nicotinamide D-nucleotide.. In terms of biological role, DNA ligase that catalyzes the formation of phosphodiester linkages between 5'-phosphoryl and 3'-hydroxyl groups in double-stranded DNA using NAD as a coenzyme and as the energy source for the reaction. It is essential for DNA replication and repair of damaged DNA. The chain is DNA ligase from Acidiphilium cryptum (strain JF-5).